The primary structure comprises 139 residues: Large ribosomal subunit protein uL16 (139 aa).

The protein belongs to the universal ribosomal protein uL16 family. Part of the 50S ribosomal subunit.

In terms of biological role, binds 23S rRNA and is also seen to make contacts with the A and possibly P site tRNAs. The sequence is that of Large ribosomal subunit protein uL16 from Gloeothece citriformis (strain PCC 7424) (Cyanothece sp. (strain PCC 7424)).